The chain runs to 101 residues: Large ribosomal subunit protein uL23 (101 aa).

Belongs to the universal ribosomal protein uL23 family. Part of the 50S ribosomal subunit. Contacts protein L29, and trigger factor when it is bound to the ribosome.

Its function is as follows. One of the early assembly proteins it binds 23S rRNA. One of the proteins that surrounds the polypeptide exit tunnel on the outside of the ribosome. Forms the main docking site for trigger factor binding to the ribosome. This Tolumonas auensis (strain DSM 9187 / NBRC 110442 / TA 4) protein is Large ribosomal subunit protein uL23.